We begin with the raw amino-acid sequence, 1488 residues long: Phenolphthiocerol/phthiocerol polyketide synthase subunit E (1488 aa).

Residues 5–438 (ENAIAVVGMA…GTNAHVVLEE (434 aa)) enclose the Ketosynthase family 3 (KS3) domain. Residues cysteine 184, histidine 320, and histidine 361 each act as for beta-ketoacyl synthase activity in the active site. The segment at 551 to 868 (VFLFPGQGAQ…GELWSAGVEV (318 aa)) is acyltransferase. Serine 641 acts as the For malonyltransferase activity in catalysis. A Carrier domain is found at 930–1004 (NGESQTEVTL…SLTAAVDASF (75 aa)). The residue at position 965 (serine 965) is an O-(pantetheine 4'-phosphoryl)serine. NADP(+) is bound at residue 1286–1331 (EGVVAVELEGEGRSVLRPDVDLRRTVGWFTTYYPVPLACATGLGAL).

NADP(+) is required as a cofactor. Pantetheine 4'-phosphate serves as cofactor.

It catalyses the reaction icosanoyl-[(phenol)carboxyphthiodiolenone synthase] + 2 (S)-methylmalonyl-CoA + 3 malonyl-CoA + 5 NADPH + 10 H(+) = C32-carboxyphthiodiolenone-[(phenol)carboxyphthiodiolenone synthase] + 5 CO2 + 5 NADP(+) + 5 CoA + 2 H2O. The enzyme catalyses docosanoyl-[(phenol)carboxyphthiodiolenone synthase] + 2 (S)-methylmalonyl-CoA + 3 malonyl-CoA + 5 NADPH + 10 H(+) = C34-carboxyphthiodiolenone-[(phenol)carboxyphthiodiolenone synthase] + 5 CO2 + 5 NADP(+) + 5 CoA + 2 H2O. The catalysed reaction is 17-(4-hydroxyphenyl)heptadecanoyl-[(phenol)carboxyphthiodiolenone synthase] + 2 (S)-methylmalonyl-CoA + 3 malonyl-CoA + 5 NADPH + 10 H(+) = C35-(phenol)carboxyphthiodiolenone-[(phenol)carboxyphthiodiolenone synthase] + 5 CO2 + 5 NADP(+) + 5 CoA + 2 H2O. It carries out the reaction 19-(4-hydroxyphenyl)nonadecanoyl-[(phenol)carboxyphthiodiolenone synthase] + 2 (S)-methylmalonyl-CoA + 3 malonyl-CoA + 5 NADPH + 10 H(+) = C37-(phenol)carboxyphthiodiolenone-[(phenol)carboxyphthiodiolenone synthase] + 5 CO2 + 5 NADP(+) + 5 CoA + 2 H2O. Its pathway is lipid metabolism; fatty acid biosynthesis. Part of the PpsABCDE complex involved in the biosynthesis of the lipid core common to phthiocerols and phenolphthiocerols by successive additions of malonyl-CoA or methylmalonyl-CoA extender units. PpsA can accept as substrate the activated forms of either icosanoyl (C20), docosanoyl (C22) or lignoceroyl (C24) groups from FadD26, or a (4-hydroxyphenyl)-C17 or (4-hydroxyphenyl)-C19 fatty acyl from FadD29. PpsA initiates the biosynthesis and extends its substrate using a malonyl-CoA extender unit. The PpsB and PpsC proteins add the second and third malonyl-CoA extender units. PpsD adds an (R)-methylmalonyl unit and PpsE adds a second (R)-methylmalonyl unit. The incorporation of the methylmalonyl units results in formation of two branched methyl groups in the elongated product. In Mycobacterium tuberculosis (strain CDC 1551 / Oshkosh), this protein is Phenolphthiocerol/phthiocerol polyketide synthase subunit E (ppsE).